The following is a 201-amino-acid chain: 3-isopropylmalate dehydratase small subunit (201 aa).

The protein belongs to the LeuD family. LeuD type 1 subfamily. As to quaternary structure, heterodimer of LeuC and LeuD.

It catalyses the reaction (2R,3S)-3-isopropylmalate = (2S)-2-isopropylmalate. It participates in amino-acid biosynthesis; L-leucine biosynthesis; L-leucine from 3-methyl-2-oxobutanoate: step 2/4. Functionally, catalyzes the isomerization between 2-isopropylmalate and 3-isopropylmalate, via the formation of 2-isopropylmaleate. This is 3-isopropylmalate dehydratase small subunit from Rhodopseudomonas palustris (strain HaA2).